A 287-amino-acid polypeptide reads, in one-letter code: rRNA adenine N-6-methyltransferase (287 aa).

Basic residues predominate over residues 1–13 (MKKKNHKYRGKKL). Residues 1–21 (MKKKNHKYRGKKLNRGESPNF) are disordered. S-adenosyl-L-methionine contacts are provided by His25, Met27, Gly52, Glu73, Asp98, and Asn114.

The protein belongs to the class I-like SAM-binding methyltransferase superfamily. rRNA adenine N(6)-methyltransferase family. Homodimer.

Involved in erythromycin resistance. The polypeptide is rRNA adenine N-6-methyltransferase (ermJ) (Bacillus anthracis).